The chain runs to 301 residues: uncharacterized protein (301 aa).

Belongs to the asfivirus E301R family. In terms of assembly, interacts with host IRF3.

In terms of biological role, plays a role in the inhibition of host innate immune system by acting as a negatively regulator of type I interferon production. Mechanistically, interacts with and prevents host IRF3 nuclear localization to inhibit its transcriptional activity. This is an uncharacterized protein from African swine fever virus (strain Badajoz 1971 Vero-adapted) (Ba71V).